Consider the following 336-residue polypeptide: Putative bifunctional cytochrome c-type biogenesis protein CcmAE (336 aa).

Residues 1-199 (MLEARDLYCE…ADTVRRLALT (199 aa)) form a cytochrome c biogenesis ATP-binding export protein CcmA 2 region. The 241-residue stretch at 2 to 242 (LEARDLYCER…VGQRLRVGGM (241 aa)) folds into the ABC transporter domain. 34–41 (GGNGAGKT) contacts ATP. Residues 196–336 (LALTTALVLY…PQRVDKDTSS (141 aa)) are cytochrome c-type biogenesis protein CcmE 2. Heme contacts are provided by H307 and Y311. Residues 307 to 336 (HDENYTPPEVEKAMQENHRRPQRVDKDTSS) form a disordered region.

The protein in the N-terminal section; belongs to the ABC transporter superfamily. CcmA exporter (TC 3.A.1.107) family. This sequence in the C-terminal section; belongs to the CcmE/CycJ family.

It is found in the cell inner membrane. It catalyses the reaction heme b(in) + ATP + H2O = heme b(out) + ADP + phosphate + H(+). In terms of biological role, part of the ABC transporter complex CcmAB involved in the biogenesis of c-type cytochromes; once thought to export heme, this seems not to be the case, but its exact role is uncertain. Responsible for energy coupling to the transport system. Heme chaperone required for the biogenesis of c-type cytochromes. Transiently binds heme delivered by CcmC and transfers the heme to apo-cytochromes in a process facilitated by CcmF and CcmH. This is Putative bifunctional cytochrome c-type biogenesis protein CcmAE (ccmAE) from Salmonella choleraesuis (strain SC-B67).